The following is a 498-amino-acid chain: Calcium-dependent protein kinase 22 (498 aa).

Residue glycine 2 is the site of N-myristoyl glycine attachment. The Protein kinase domain maps to 36-305 (YSFGDELGKG…AADVLEHPWM (270 aa)). ATP contacts are provided by residues 42-50 (LGKGNFGTT) and lysine 65. Aspartate 164 (proton acceptor) is an active-site residue. Serine 204 carries the phosphoserine modification. The interval 309–339 (APDKPIDNVVLSRMKQFRAMNKLKKLALKVI) is autoinhibitory domain. 4 EF-hand domains span residues 346 to 381 (EEIK…HGSK), 382 to 417 (LSET…RHRL), 418 to 453 (ERDE…HGMG), and 454 to 488 (DEAN…GILQ). Positions 359, 361, 363, 365, 370, 395, 397, 399, 401, 406, 431, 433, 435, 437, 442, 466, 468, 470, 472, and 477 each coordinate Ca(2+).

It belongs to the protein kinase superfamily. Ser/Thr protein kinase family. CDPK subfamily.

The protein resides in the membrane. The enzyme catalyses L-seryl-[protein] + ATP = O-phospho-L-seryl-[protein] + ADP + H(+). The catalysed reaction is L-threonyl-[protein] + ATP = O-phospho-L-threonyl-[protein] + ADP + H(+). Activated by calcium. Autophosphorylation may play an important role in the regulation of the kinase activity. May play a role in signal transduction pathways that involve calcium as a second messenger. This is Calcium-dependent protein kinase 22 (CPK22) from Arabidopsis thaliana (Mouse-ear cress).